Here is a 102-residue protein sequence, read N- to C-terminus: Small ribosomal subunit protein uS10 (102 aa).

Belongs to the universal ribosomal protein uS10 family. Part of the 30S ribosomal subunit.

In terms of biological role, involved in the binding of tRNA to the ribosomes. In Lactiplantibacillus plantarum (strain ATCC BAA-793 / NCIMB 8826 / WCFS1) (Lactobacillus plantarum), this protein is Small ribosomal subunit protein uS10.